Reading from the N-terminus, the 369-residue chain is DNA replication and repair protein RecF (369 aa).

ATP is bound at residue 30–37 (GENGQGKT).

It belongs to the RecF family.

Its subcellular location is the cytoplasm. The RecF protein is involved in DNA metabolism; it is required for DNA replication and normal SOS inducibility. RecF binds preferentially to single-stranded, linear DNA. It also seems to bind ATP. This Anaeromyxobacter sp. (strain Fw109-5) protein is DNA replication and repair protein RecF.